The following is a 531-amino-acid chain: Apolipoprotein N-acyltransferase (531 aa).

The next 7 membrane-spanning stretches (helical) occupy residues 8–28 (IILL…LLAV), 34–54 (FGIF…IDGV), 69–89 (PAAI…WWLG), 105–125 (LTVV…VVIA), 136–156 (IAAL…LFTG), 178–198 (VVNL…PALI), and 206–226 (AGLA…FYRL). A CN hydrolase domain is found at 243–493 (VQPVIDQAKK…RGVIDTILPG (251 aa)). Glu-287 functions as the Proton acceptor in the catalytic mechanism. The active site involves Lys-351. Cys-405 acts as the Nucleophile in catalysis. The chain crosses the membrane as a helical span at residues 507–527 (IFWLTTGILFLVAAISRLGFN).

This sequence belongs to the CN hydrolase family. Apolipoprotein N-acyltransferase subfamily.

It localises to the cell inner membrane. It carries out the reaction N-terminal S-1,2-diacyl-sn-glyceryl-L-cysteinyl-[lipoprotein] + a glycerophospholipid = N-acyl-S-1,2-diacyl-sn-glyceryl-L-cysteinyl-[lipoprotein] + a 2-acyl-sn-glycero-3-phospholipid + H(+). The protein operates within protein modification; lipoprotein biosynthesis (N-acyl transfer). Catalyzes the phospholipid dependent N-acylation of the N-terminal cysteine of apolipoprotein, the last step in lipoprotein maturation. The protein is Apolipoprotein N-acyltransferase of Rhizobium meliloti (strain 1021) (Ensifer meliloti).